A 185-amino-acid chain; its full sequence is Acireductone dioxygenase (185 aa).

Fe(2+) is bound by residues His96, His98, Glu102, and His140. Residues His96, His98, Glu102, and His140 each contribute to the Ni(2+) site.

This sequence belongs to the acireductone dioxygenase (ARD) family. In terms of assembly, monomer. The cofactor is Fe(2+). Requires Ni(2+) as cofactor.

The enzyme catalyses 1,2-dihydroxy-5-(methylsulfanyl)pent-1-en-3-one + O2 = 3-(methylsulfanyl)propanoate + CO + formate + 2 H(+). It carries out the reaction 1,2-dihydroxy-5-(methylsulfanyl)pent-1-en-3-one + O2 = 4-methylsulfanyl-2-oxobutanoate + formate + 2 H(+). It participates in amino-acid biosynthesis; L-methionine biosynthesis via salvage pathway; L-methionine from S-methyl-5-thio-alpha-D-ribose 1-phosphate: step 5/6. Functionally, catalyzes 2 different reactions between oxygen and the acireductone 1,2-dihydroxy-3-keto-5-methylthiopentene (DHK-MTPene) depending upon the metal bound in the active site. Fe-containing acireductone dioxygenase (Fe-ARD) produces formate and 2-keto-4-methylthiobutyrate (KMTB), the alpha-ketoacid precursor of methionine in the methionine recycle pathway. Ni-containing acireductone dioxygenase (Ni-ARD) produces methylthiopropionate, carbon monoxide and formate, and does not lie on the methionine recycle pathway. The sequence is that of Acireductone dioxygenase from Marinobacter nauticus (strain ATCC 700491 / DSM 11845 / VT8) (Marinobacter aquaeolei).